A 365-amino-acid polypeptide reads, in one-letter code: Glucose 1-dehydrogenase 1 (365 aa).

Residue aspartate 38 coordinates Zn(2+). Threonine 40 serves as a coordination point for substrate. Zn(2+) is bound by residues histidine 63 and glutamate 64. Substrate contacts are provided by glutamate 115 and glutamate 151. Glutamate 151 serves as a coordination point for Zn(2+). NADP(+) is bound by residues 182–185 (NGSL), 207–208 (RR), 272–274 (LGV), and 301–303 (SVN). Asparagine 303 is a binding site for substrate.

The protein belongs to the zinc-containing alcohol dehydrogenase family. Glucose 1-dehydrogenase subfamily. The cofactor is Zn(2+).

The catalysed reaction is D-glucose + NAD(+) = D-glucono-1,5-lactone + NADH + H(+). It carries out the reaction D-glucose + NADP(+) = D-glucono-1,5-lactone + NADPH + H(+). Catalyzes the NAD(P)(+)-dependent oxidation of D-glucose to D-gluconate via gluconolactone. Can utilize both NAD(+) and NADP(+) as electron acceptor. Is involved in the degradation of glucose through a modified Entner-Doudoroff pathway. This Haloterrigena turkmenica (strain ATCC 51198 / DSM 5511 / JCM 9101 / NCIMB 13204 / VKM B-1734 / 4k) (Halococcus turkmenicus) protein is Glucose 1-dehydrogenase 1.